Here is a 117-residue protein sequence, read N- to C-terminus: Replication initiation control protein YabA (117 aa).

Positions 87, 89, 103, and 106 each coordinate Zn(2+).

Belongs to the YabA family. Homotetramer. Interacts with both DnaA and DnaN, acting as a bridge between these two proteins. Requires Zn(2+) as cofactor.

Its subcellular location is the cytoplasm. The protein resides in the nucleoid. Involved in control of chromosome replication initiation. Inhibits the cooperative binding of DnaA to the oriC region, thus negatively regulating initiation of chromosome replication. Inhibits the ability of DnaA-ATP to form a helix on DNA; does not disassemble preformed DnaA-DNA helices. Decreases the residence time of DnaA on the chromosome at its binding sites (oriC, replication forks and promoter-binding sites). Tethers DnaA to the replication machinery via the DNA polymerase beta sliding clamp subunit (dnaN). Associates with oriC and other DnaA targets on the chromosome in a DnaA-dependent manner. The sequence is that of Replication initiation control protein YabA from Latilactobacillus sakei subsp. sakei (strain 23K) (Lactobacillus sakei subsp. sakei).